The primary structure comprises 947 residues: Leucine-rich repeat-containing protein 37B (947 aa).

The first 27 residues, 1 to 27 (MSWLRFWGPWPLLTWQLLSLLVKEAQP), serve as a signal peptide directing secretion. Topologically, residues 28 to 905 (LVWVKDPLQL…EVPGDDYKNK (878 aa)) are extracellular. Disordered regions lie at residues 42 to 88 (LGPP…ALPQ), 226 to 257 (YLSM…QVGL), 294 to 458 (EVEP…PEPT), and 484 to 514 (SLTE…EQKA). A compositionally biased stretch (polar residues) spans 311–320 (SMESLAQTPL). Asparagine 358 is a glycosylation site (N-linked (GlcNAc...) asparagine). Polar residues-rich tracts occupy residues 404 to 415 (GQAQHSHLTEAT), 436 to 445 (SPTTEETSAQ), and 495 to 507 (LESS…QSET). 6 LRR repeats span residues 556–577 (IFTT…VWKA), 580–601 (WTEK…SFEG), 604–625 (YLQY…TFES), 628–649 (FLQY…TFQA), 655–676 (FLHN…YLFE), and 679–699 (ALKY…KNIL). N-linked (GlcNAc...) asparagine glycosylation is present at asparagine 789. Residues 867-897 (DTDQQKTNYINENMEQNEQKEQKSSELMKEV) are a coiled coil. The chain crosses the membrane as a helical span at residues 906–926 (LIFAISVTVILIILIIIFCLI). Residues 927 to 947 (EVNSHKRASEKYKDNPSISGA) lie on the Cytoplasmic side of the membrane.

Its subcellular location is the membrane. In Homo sapiens (Human), this protein is Leucine-rich repeat-containing protein 37B (LRRC37B).